Consider the following 235-residue polypeptide: KNMITGAAQMDGAILVVSGADGPMPQTKEHILLAKQVGVPNIVVFLNKEDQVDDDELLELVELEVRDTLSSYEFPGDDIPVVPGSALLALEALTEKPAMSAGENKWVDKIFALMDAVDSYIPTPERDTAKTFLMAIEDVFSITGRGTVATGRVERGTVNCGDVVEIVGLGDTREVTVTGLEMFQKHLDESVAGDKVGVLLRGIQKDDIERGMVLAKKGTITPHTKFESQVYVLSK.

In terms of domain architecture, tr-type G spans 1-125 (KNMITGAAQM…AVDSYIPTPE (125 aa)). 47–50 (NKED) contacts GTP.

The protein belongs to the TRAFAC class translation factor GTPase superfamily. Classic translation factor GTPase family. EF-Tu/EF-1A subfamily.

It localises to the plastid. Its subcellular location is the chloroplast. It catalyses the reaction GTP + H2O = GDP + phosphate + H(+). Functionally, GTP hydrolase that promotes the GTP-dependent binding of aminoacyl-tRNA to the A-site of ribosomes during protein biosynthesis. The protein is Elongation factor Tu, chloroplastic (tufA) of Mantoniella squamata (Unicellular alga).